We begin with the raw amino-acid sequence, 158 residues long: Small ribosomal subunit protein uS7 (158 aa).

This sequence belongs to the universal ribosomal protein uS7 family. In terms of assembly, part of the 30S ribosomal subunit. Contacts proteins S9 and S11.

Its function is as follows. One of the primary rRNA binding proteins, it binds directly to 16S rRNA where it nucleates assembly of the head domain of the 30S subunit. Is located at the subunit interface close to the decoding center, probably blocks exit of the E-site tRNA. This Parabacteroides distasonis (strain ATCC 8503 / DSM 20701 / CIP 104284 / JCM 5825 / NCTC 11152) protein is Small ribosomal subunit protein uS7.